Reading from the N-terminus, the 542-residue chain is MPEHPRHCDFQRGNVEIGLGPGGDLLGKRLSCPCITSHCSSEKKARSKDPQATSLLPELESTMAPEDHYHQLMSALSEASSFEETQRLYHLGIPSHDLLRVRQEVATATLRGPSGLEVHLPSSTADHRRKQGLVQRREGAVPAAATSFSEREMSQPPPLLSPQNAAHITMSSHLRPPFLGMPTAVCQTPGFSFLPSAQAEMLARQQELLRKQSLARLEMSELLRQKELGSVHRPLLPAPEVALHIPEGPDELQRRGSMLVLKHSSAPLLALPPQGPPGPGPPIPPKESARSRSEKGSLGVQPSQPKETTGAGLWAQEVSEEPSKDSDGEDPETAAAREGTSTPSQVPAGGTRAEGRGLLSGSTLPPPLPLGFPCGAVSPYFHTGTMGGLFTDEETTTLEDVNKWTVDDVCNFVGGLSGCGEYARVFGEQGIDGETLPLLTEEHLLNTMGLKLGPALKIRAQVAKRLGRVFYMASFPVALPLQPPSLQAPELSPGHQPLSPATTTSPYEGTHLPTGQASPKQENGSGTIALLSGAPDPSQLLQ.

The interval 268-364 is disordered; sequence LLALPPQGPP…GRGLLSGSTL (97 aa). The segment covering 273–285 has biased composition (pro residues); sequence PQGPPGPGPPIPP. A Phosphothreonine modification is found at T342. Residues 404–469 form the SAM domain; the sequence is WTVDDVCNFV…AQVAKRLGRV (66 aa). The segment at 486–542 is disordered; that stretch reads LQAPELSPGHQPLSPATTTSPYEGTHLPTGQASPKQENGSGTIALLSGAPDPSQLLQ. S499 carries the post-translational modification Phosphoserine. The segment covering 499–526 has biased composition (polar residues); sequence SPATTTSPYEGTHLPTGQASPKQENGSG.

As to quaternary structure, self-associates. Component of a Polycomb group (PcG) multiprotein PRC1-like complex. Interacts with SAMD7 and PHC2. In terms of tissue distribution, expressed in the outer nuclear layer of rod photoreceptors in the retina (at protein level). Predominantly expressed in retinal photoreceptors and pineal gland.

The protein resides in the nucleus. Functionally, component of a Polycomb group (PcG) multiprotein PRC1-like complex, essential for establishing rod photoreceptor cell identity and function by silencing nonrod gene expression in developing rod photoreceptor cells. The chain is Sterile alpha motif domain-containing protein 11 (Samd11) from Mus musculus (Mouse).